A 577-amino-acid chain; its full sequence is Thrombomodulin (577 aa).

Residues 1–16 (MLGIFFLGVLAPASLG) form the signal peptide. Topologically, residues 17 to 517 (LSALAKLQPT…GPPSARPVHS (501 aa)) are extracellular. Positions 31-167 (VEHECFALFQ…TETQGFLCEF (137 aa)) constitute a C-type lectin domain. N-linked (GlcNAc...) asparagine glycosylation occurs at N113. C135 and C156 are disulfide-bonded. EGF-like domains are found at residues 240-280 (GAWN…RSCA) and 283-323 (VVQS…HRCE). The N-linked (GlcNAc...) asparagine glycan is linked to N243. 18 disulfides stabilise this stretch: C244–C255, C251–C264, C266–C279, C287–C295, C291–C307, C309–C322, C328–C339, C335–C348, C350–C361, C368–C377, C373–C387, C389–C403, C407–C416, C412–C424, C426–C438, C444–C454, C449–C463, and C465–C479. N-linked (GlcNAc...) asparagine glycosylation occurs at N256. The EGF-like 3; calcium-binding domain occupies 324–362 (DVDDCKQGPNPCPQLCVNTKGGFECFCYDGYELVDGECV). EGF-like domains follow at residues 364 to 404 (LLDP…HKCE) and 403 to 439 (CEMF…SVCT). Residue N408 is glycosylated (N-linked (GlcNAc...) asparagine). The region spanning 440–480 (DIDECSQGECFTSECRNFPGSYECICGPDTALAGQISKDCD) is the EGF-like 6; calcium-binding domain. A disordered region spans residues 476–513 (SKDCDPIPVREDTKEEEGSGEPPVSPTPGSPTGPPSAR). Positions 477 to 492 (KDCDPIPVREDTKEEE) are enriched in basic and acidic residues. Residue S494 is glycosylated (O-linked (Xyl...) (chondroitin sulfate) serine). Positions 498–512 (PVSPTPGSPTGPPSA) are enriched in pro residues. A helical membrane pass occupies residues 518-541 (GVLIGISIASLSLVVALLALLCHL). At 542 to 577 (RKKQGAARAELEYKCASSAKEVVLQHVRTDRTLQKF) the chain is on the cytoplasmic side.

Interacts with ITGAL, ITGAM and ITGB2. Interacts with thrombin/F2; this interaction switches the specificity of thrombin from a procoagulant to an anticoagulant and antifibrinolytic protease. Interacts with ANGP1 and ANGP2; these interactions significantly inhibit the generation of activated PC and TAFIa/CPB2 by the thrombin/thrombomodulin complex. Interacts with PF4; this interaction enhances generation of activated protein C. Interacts with HMGB1; this interaction inhibits HMGB1 inflammatory activity. In terms of tissue distribution, endothelial cells are unique in synthesizing thrombomodulin.

It is found in the membrane. Endothelial cell receptor that plays a critical role in regulating several physiological processes including hemostasis, coagulation, fibrinolysis, inflammation, and angiogenesis. Acts as a cofactor for thrombin activation of protein C/PROC on the surface of vascular endothelial cells leading to initiation of the activated protein C anticoagulant pathway. Also accelerates the activation of the plasma carboxypeptidase B2/CPB2, which catalyzes removal of C-terminal basic amino acids from its substrates including kinins or anaphylatoxins leading to fibrinolysis inhibition. Plays critical protective roles in changing the cleavage specificity of protease-activated receptor 1/PAR1, inhibiting endothelial cell permeability and inflammation. Suppresses inflammation distinctly from its anticoagulant cofactor activity by sequestering HMGB1 thereby preventing it from engaging cellular receptors such as RAGE and contributing to the inflammatory response. The chain is Thrombomodulin (Thbd) from Mus musculus (Mouse).